We begin with the raw amino-acid sequence, 105 residues long: Nitrogenase-stabilizing/protective protein NifW 2 (105 aa).

This sequence belongs to the NifW family.

Functionally, may protect the nitrogenase Fe-Mo protein from oxidative damage. In Trichormus variabilis (strain ATCC 29413 / PCC 7937) (Anabaena variabilis), this protein is Nitrogenase-stabilizing/protective protein NifW 2 (nifW2).